The following is a 130-amino-acid chain: Small ribosomal subunit protein uS11 (130 aa).

The protein belongs to the universal ribosomal protein uS11 family. In terms of assembly, part of the 30S ribosomal subunit. Interacts with proteins S7 and S18. Binds to IF-3.

Functionally, located on the platform of the 30S subunit, it bridges several disparate RNA helices of the 16S rRNA. Forms part of the Shine-Dalgarno cleft in the 70S ribosome. The sequence is that of Small ribosomal subunit protein uS11 from Xylella fastidiosa (strain 9a5c).